The chain runs to 386 residues: DNA replication and repair protein RecF (386 aa).

30–37 (GSNGFGKT) contacts ATP.

Belongs to the RecF family.

The protein resides in the cytoplasm. In terms of biological role, the RecF protein is involved in DNA metabolism; it is required for DNA replication and normal SOS inducibility. RecF binds preferentially to single-stranded, linear DNA. It also seems to bind ATP. The sequence is that of DNA replication and repair protein RecF from Mycolicibacterium vanbaalenii (strain DSM 7251 / JCM 13017 / BCRC 16820 / KCTC 9966 / NRRL B-24157 / PYR-1) (Mycobacterium vanbaalenii).